Consider the following 269-residue polypeptide: Cytochrome c oxidase subunit 3 (269 aa).

The next 6 membrane-spanning stretches (helical) occupy residues 46-66 (NSYYLFFISLILVISSMAFWF), 90-110 (GVILFIVSEALFFLAIFWAFF), 138-160 (PLLNTVILLSSGATVTYAHHSLI), 167-187 (ALYGSIITILLAIIFTVFQGV), 207-227 (FGTGFHGFHVIIGTIFLAVAL), and 247-267 (ILYWHFVDVVWLFLYVSIYYW).

Belongs to the cytochrome c oxidase subunit 3 family. In terms of assembly, component of the cytochrome c oxidase (complex IV, CIV), a multisubunit enzyme composed of a catalytic core of 3 subunits and several supernumerary subunits. The complex exists as a monomer or a dimer and forms supercomplexes (SCs) in the inner mitochondrial membrane with ubiquinol-cytochrome c oxidoreductase (cytochrome b-c1 complex, complex III, CIII).

Its subcellular location is the mitochondrion inner membrane. It carries out the reaction 4 Fe(II)-[cytochrome c] + O2 + 8 H(+)(in) = 4 Fe(III)-[cytochrome c] + 2 H2O + 4 H(+)(out). Its function is as follows. Component of the cytochrome c oxidase, the last enzyme in the mitochondrial electron transport chain which drives oxidative phosphorylation. The respiratory chain contains 3 multisubunit complexes succinate dehydrogenase (complex II, CII), ubiquinol-cytochrome c oxidoreductase (cytochrome b-c1 complex, complex III, CIII) and cytochrome c oxidase (complex IV, CIV), that cooperate to transfer electrons derived from NADH and succinate to molecular oxygen, creating an electrochemical gradient over the inner membrane that drives transmembrane transport and the ATP synthase. Cytochrome c oxidase is the component of the respiratory chain that catalyzes the reduction of oxygen to water. Electrons originating from reduced cytochrome c in the intermembrane space (IMS) are transferred via the dinuclear copper A center (CU(A)) of subunit 2 and heme A of subunit 1 to the active site in subunit 1, a binuclear center (BNC) formed by heme A3 and copper B (CU(B)). The BNC reduces molecular oxygen to 2 water molecules using 4 electrons from cytochrome c in the IMS and 4 protons from the mitochondrial matrix. This is Cytochrome c oxidase subunit 3 (COIII) from Podospora anserina (strain S / ATCC MYA-4624 / DSM 980 / FGSC 10383) (Pleurage anserina).